The primary structure comprises 344 residues: Ubiquitin-associated domain-containing protein 2 (344 aa).

An N-terminal signal peptide occupies residues 1–34 (MFTSTGSNGLYKAPLSKSLLLVPSAISILLTLLF). The Extracellular segment spans residues 35-91 (QHYQKFFAYNLQAIKEDFQIWRLVCGRVICLDLKDTFCSSLLIYNFRIFERRYGSRK). Residues 92 to 111 (FSSFLLGAWTLSALFDLLLV) form a helical membrane-spanning segment. The Cytoplasmic portion of the chain corresponds to 112-123 (EAAQYVFGITIN). The helical transmembrane segment at 124-142 (SLPSGFLGPVFALFVPFYC) threads the bilayer. Over 143-162 (SIPRVQVTQVLGYFSITNKT) the chain is Extracellular. N-linked (GlcNAc...) asparagine glycosylation is present at Asn160. A helical transmembrane segment spans residues 163–183 (LVYILGLQLLTSGSYIWILAL). Residues 184-344 (SGLISGICYN…NVATNFLLQH (161 aa)) lie on the Cytoplasmic side of the membrane. Positions 284-307 (RHNENYQDHHPSDQDTPPPTEVSE) are disordered. The span at 286 to 296 (NENYQDHHPSD) shows a compositional bias: basic and acidic residues. The UBA domain occupies 304–344 (EVSEEQVARLMEMGFSRGDALEALRASNNDLNVATNFLLQH).

It localises to the endoplasmic reticulum membrane. Restricts trafficking of FAF2 from the endoplasmic reticulum to lipid droplets. May negatively regulate the canonical Wnt signaling pathway in the lymphocytes. The protein is Ubiquitin-associated domain-containing protein 2 (UBAC2) of Gallus gallus (Chicken).